Consider the following 173-residue polypeptide: NADH-ubiquinone oxidoreductase chain 6 (173 aa).

5 helical membrane-spanning segments follow: residues 1-21 (MTYF…AVAS), 27-47 (YGVV…LSLG), 48-68 (VSFV…VVFV), 87-107 (VVGY…VGGL), and 139-159 (CGVG…FVVL).

This sequence belongs to the complex I subunit 6 family.

The protein resides in the mitochondrion membrane. The enzyme catalyses a ubiquinone + NADH + 5 H(+)(in) = a ubiquinol + NAD(+) + 4 H(+)(out). In terms of biological role, core subunit of the mitochondrial membrane respiratory chain NADH dehydrogenase (Complex I) that is believed to belong to the minimal assembly required for catalysis. Complex I functions in the transfer of electrons from NADH to the respiratory chain. The immediate electron acceptor for the enzyme is believed to be ubiquinone. The protein is NADH-ubiquinone oxidoreductase chain 6 (MT-ND6) of Larus canus (Common gull).